A 243-amino-acid chain; its full sequence is Pyridoxine 5'-phosphate synthase (243 aa).

3-amino-2-oxopropyl phosphate is bound at residue N9. D11–H12 contributes to the 1-deoxy-D-xylulose 5-phosphate binding site. R20 is a binding site for 3-amino-2-oxopropyl phosphate. H45 (proton acceptor) is an active-site residue. 1-deoxy-D-xylulose 5-phosphate-binding residues include R47 and H52. The Proton acceptor role is filled by E72. Residue T102 participates in 1-deoxy-D-xylulose 5-phosphate binding. Residue H193 is the Proton donor of the active site. Residues G194 and G215–H216 contribute to the 3-amino-2-oxopropyl phosphate site.

The protein belongs to the PNP synthase family. Homooctamer; tetramer of dimers.

The protein localises to the cytoplasm. It carries out the reaction 3-amino-2-oxopropyl phosphate + 1-deoxy-D-xylulose 5-phosphate = pyridoxine 5'-phosphate + phosphate + 2 H2O + H(+). It functions in the pathway cofactor biosynthesis; pyridoxine 5'-phosphate biosynthesis; pyridoxine 5'-phosphate from D-erythrose 4-phosphate: step 5/5. In terms of biological role, catalyzes the complicated ring closure reaction between the two acyclic compounds 1-deoxy-D-xylulose-5-phosphate (DXP) and 3-amino-2-oxopropyl phosphate (1-amino-acetone-3-phosphate or AAP) to form pyridoxine 5'-phosphate (PNP) and inorganic phosphate. In Photobacterium profundum (strain SS9), this protein is Pyridoxine 5'-phosphate synthase.